Here is a 398-residue protein sequence, read N- to C-terminus: tRNA-specific 2-thiouridylase MnmA (398 aa).

Residues 18-25 (AMSGGVDS) and Leu-44 contribute to the ATP site. Cys-112 (nucleophile) is an active-site residue. A disulfide bond links Cys-112 and Cys-213. Gly-136 provides a ligand contact to ATP. An interaction with tRNA region spans residues 163-165 (RDQ). The Cysteine persulfide intermediate role is filled by Cys-213.

This sequence belongs to the MnmA/TRMU family.

It localises to the cytoplasm. It carries out the reaction S-sulfanyl-L-cysteinyl-[protein] + uridine(34) in tRNA + AH2 + ATP = 2-thiouridine(34) in tRNA + L-cysteinyl-[protein] + A + AMP + diphosphate + H(+). Catalyzes the 2-thiolation of uridine at the wobble position (U34) of tRNA, leading to the formation of s(2)U34. This is tRNA-specific 2-thiouridylase MnmA from Rhizobium meliloti (strain 1021) (Ensifer meliloti).